The primary structure comprises 285 residues: HTH-type transcriptional regulator MurR (285 aa).

The HTH rpiR-type domain maps to 1–77; the sequence is MLYLTKIRNA…MALIGEYSAS (77 aa). The H-T-H motif DNA-binding region spans 37 to 56; it reads SRQMAKQLGISQSSIVKFAQ. In terms of domain architecture, SIS spans 128–268; the sequence is IIEVISKAPF…FVGLVQLNDV (141 aa).

In terms of assembly, homotetramer.

It functions in the pathway amino-sugar metabolism; N-acetylmuramate degradation [regulation]. In terms of biological role, represses the expression of the murPQ operon involved in the uptake and degradation of N-acetylmuramic acid (MurNAc). Binds to two adjacent inverted repeats within the operator region. MurNAc 6-phosphate, the substrate of MurQ, is the specific inducer that weakens binding of MurR to the operator. This chain is HTH-type transcriptional regulator MurR, found in Escherichia coli (strain ATCC 8739 / DSM 1576 / NBRC 3972 / NCIMB 8545 / WDCM 00012 / Crooks).